Reading from the N-terminus, the 236-residue chain is Phospholipid hydroperoxide glutathione peroxidase, chloroplastic (236 aa).

A chloroplast-targeting transit peptide spans 1 to 64 (MASMAFSTTF…SNFPIVPSKT (64 aa)). C111 is an active-site residue.

This sequence belongs to the glutathione peroxidase family.

Its subcellular location is the plastid. The protein localises to the chloroplast stroma. The enzyme catalyses a hydroperoxy polyunsaturated fatty acid + 2 glutathione = a hydroxy polyunsaturated fatty acid + glutathione disulfide + H2O. Its function is as follows. Protects cells and enzymes from oxidative damage, by catalyzing the reduction of hydrogen peroxide, lipid peroxides and organic hydroperoxide, by glutathione. The polypeptide is Phospholipid hydroperoxide glutathione peroxidase, chloroplastic (Pisum sativum (Garden pea)).